The chain runs to 438 residues: Asparagine--tRNA ligase (438 aa).

The protein belongs to the class-II aminoacyl-tRNA synthetase family. Homodimer.

It localises to the cytoplasm. The catalysed reaction is tRNA(Asn) + L-asparagine + ATP = L-asparaginyl-tRNA(Asn) + AMP + diphosphate + H(+). This Thermus thermophilus (strain ATCC 27634 / DSM 579 / HB8) protein is Asparagine--tRNA ligase.